A 181-amino-acid polypeptide reads, in one-letter code: Shikimate kinase (181 aa).

An ATP-binding site is contributed by 23-28 (GTGKST). A Mg(2+)-binding site is contributed by Ser-27. Positions 45, 69, and 91 each coordinate substrate. Arg-129 provides a ligand contact to ATP. Residue Arg-148 coordinates substrate.

This sequence belongs to the shikimate kinase family. In terms of assembly, monomer. It depends on Mg(2+) as a cofactor.

It localises to the cytoplasm. It carries out the reaction shikimate + ATP = 3-phosphoshikimate + ADP + H(+). The protein operates within metabolic intermediate biosynthesis; chorismate biosynthesis; chorismate from D-erythrose 4-phosphate and phosphoenolpyruvate: step 5/7. Functionally, catalyzes the specific phosphorylation of the 3-hydroxyl group of shikimic acid using ATP as a cosubstrate. This chain is Shikimate kinase, found in Geobacter sulfurreducens (strain ATCC 51573 / DSM 12127 / PCA).